A 292-amino-acid chain; its full sequence is uncharacterized protein (292 aa).

4 residues coordinate NADP(+): Leu-17, Asp-55, Asn-82, and Lys-115. Catalysis depends on Ser-134, which acts as the Proton donor. The NADP(+) site is built by Tyr-148, Lys-152, and Thr-184. Tyr-148 serves as the catalytic Proton acceptor. Lys-152 functions as the Lowers pKa of active site Tyr in the catalytic mechanism.

Belongs to the short-chain dehydrogenases/reductases (SDR) family.

The protein localises to the cytoplasm. This is an uncharacterized protein from Schizosaccharomyces pombe (strain 972 / ATCC 24843) (Fission yeast).